The primary structure comprises 298 residues: Ethanolamine ammonia-lyase small subunit (298 aa).

Adenosylcob(III)alamin is bound by residues V210, E231, and C261.

Belongs to the EutC family. As to quaternary structure, the basic unit is a heterodimer which dimerizes to form tetramers. The heterotetramers trimerize; 6 large subunits form a core ring with 6 small subunits projecting outwards. The cofactor is adenosylcob(III)alamin.

Its subcellular location is the bacterial microcompartment. It catalyses the reaction ethanolamine = acetaldehyde + NH4(+). It participates in amine and polyamine degradation; ethanolamine degradation. Catalyzes the deamination of various vicinal amino-alcohols to oxo compounds. Allows this organism to utilize ethanolamine as the sole source of nitrogen and carbon in the presence of external vitamin B12. The sequence is that of Ethanolamine ammonia-lyase small subunit from Salmonella heidelberg (strain SL476).